The sequence spans 238 residues: Ribonuclease PH (238 aa).

Residues Arg86 and 124-126 each bind phosphate; that span reads GTR.

This sequence belongs to the RNase PH family. In terms of assembly, homohexameric ring arranged as a trimer of dimers.

The enzyme catalyses tRNA(n+1) + phosphate = tRNA(n) + a ribonucleoside 5'-diphosphate. Phosphorolytic 3'-5' exoribonuclease that plays an important role in tRNA 3'-end maturation. Removes nucleotide residues following the 3'-CCA terminus of tRNAs; can also add nucleotides to the ends of RNA molecules by using nucleoside diphosphates as substrates, but this may not be physiologically important. Probably plays a role in initiation of 16S rRNA degradation (leading to ribosome degradation) during starvation. This chain is Ribonuclease PH, found in Salmonella gallinarum (strain 287/91 / NCTC 13346).